The chain runs to 164 residues: Probable metalloprotease y4qB (164 aa).

The region spanning 5-142 is the MPN domain; that stretch reads IWIPESVVEA…WLPHAWIGQL (138 aa). Histidine 89, histidine 91, and aspartate 103 together coordinate Zn(2+).

Belongs to the peptidase M67B family.

The polypeptide is Probable metalloprotease y4qB (Sinorhizobium fredii (strain NBRC 101917 / NGR234)).